The following is a 260-amino-acid chain: Thymidylate synthase (260 aa).

Position 21 (Arg21) interacts with dUMP. His51 serves as a coordination point for (6R)-5,10-methylene-5,6,7,8-tetrahydrofolate. Residue Arg122–Arg123 participates in dUMP binding. Catalysis depends on Cys142, which acts as the Nucleophile. DUMP is bound by residues Arg162–Asp165, Asn173, and His203–Tyr205. Asp165 lines the (6R)-5,10-methylene-5,6,7,8-tetrahydrofolate pocket. Ala259 contacts (6R)-5,10-methylene-5,6,7,8-tetrahydrofolate.

It belongs to the thymidylate synthase family. Bacterial-type ThyA subfamily. In terms of assembly, homodimer.

The protein localises to the cytoplasm. The catalysed reaction is dUMP + (6R)-5,10-methylene-5,6,7,8-tetrahydrofolate = 7,8-dihydrofolate + dTMP. It participates in pyrimidine metabolism; dTTP biosynthesis. In terms of biological role, catalyzes the reductive methylation of 2'-deoxyuridine-5'-monophosphate (dUMP) to 2'-deoxythymidine-5'-monophosphate (dTMP) while utilizing 5,10-methylenetetrahydrofolate (mTHF) as the methyl donor and reductant in the reaction, yielding dihydrofolate (DHF) as a by-product. This enzymatic reaction provides an intracellular de novo source of dTMP, an essential precursor for DNA biosynthesis. This Methylococcus capsulatus (strain ATCC 33009 / NCIMB 11132 / Bath) protein is Thymidylate synthase.